We begin with the raw amino-acid sequence, 453 residues long: Putative ABC transporter ATP-binding protein MM_0462 (453 aa).

Residues 4 to 239 (LETRSLKYSY…QELLKKVGLR (236 aa)) enclose the ABC transporter domain. 37–44 (GQNGSGKS) provides a ligand contact to ATP.

Belongs to the ABC transporter superfamily.

It localises to the cell membrane. Probably part of an ABC transporter complex. Responsible for energy coupling to the transport system. This is Putative ABC transporter ATP-binding protein MM_0462 from Methanosarcina mazei (strain ATCC BAA-159 / DSM 3647 / Goe1 / Go1 / JCM 11833 / OCM 88) (Methanosarcina frisia).